We begin with the raw amino-acid sequence, 414 residues long: Na(+)-translocating NADH-quinone reductase subunit B (414 aa).

3 helical membrane-spanning segments follow: residues 56–76 (IMIM…YNAG), 129–149 (FLPI…LFCM), and 164–184 (ILFA…LGIT). At T236 the chain carries FMN phosphoryl threonine. The next 5 membrane-spanning stretches (helical) occupy residues 268 to 288 (IPGS…AMIV), 297 to 317 (IIAG…VIGS), 325 to 345 (MPWH…FMAT), 358 to 378 (WWYG…NPAY), and 381 to 401 (GMML…HVVI).

The protein belongs to the NqrB/RnfD family. In terms of assembly, composed of six subunits; NqrA, NqrB, NqrC, NqrD, NqrE and NqrF. FMN is required as a cofactor.

The protein localises to the cell inner membrane. The catalysed reaction is a ubiquinone + n Na(+)(in) + NADH + H(+) = a ubiquinol + n Na(+)(out) + NAD(+). Its activity is regulated as follows. This reaction is tightly coupled to the Na(+) pumping activity and specifically requires Na(+) for activity. Inhibited by korormicin and 2-N-heptyl-4-hydroxyquinoline N-oxide (HQNO). In terms of biological role, NQR complex catalyzes the reduction of ubiquinone-1 to ubiquinol by two successive reactions, coupled with the transport of Na(+) ions from the cytoplasm to the periplasm. NqrA to NqrE are probably involved in the second step, the conversion of ubisemiquinone to ubiquinol. In Vibrio alginolyticus, this protein is Na(+)-translocating NADH-quinone reductase subunit B.